A 452-amino-acid polypeptide reads, in one-letter code: 3-phosphoshikimate 1-carboxyvinyltransferase (452 aa).

3-phosphoshikimate is bound by residues Lys-24, Ser-25, and Arg-29. Lys-24 is a phosphoenolpyruvate binding site. Phosphoenolpyruvate contacts are provided by Gly-95 and Arg-123. 3-phosphoshikimate-binding residues include Ser-167, Gln-169, Asp-319, and Lys-346. Gln-169 contributes to the phosphoenolpyruvate binding site. Residue Asp-319 is the Proton acceptor of the active site. Phosphoenolpyruvate is bound by residues Arg-350 and Arg-394.

It belongs to the EPSP synthase family. As to quaternary structure, monomer.

The protein resides in the cytoplasm. It carries out the reaction 3-phosphoshikimate + phosphoenolpyruvate = 5-O-(1-carboxyvinyl)-3-phosphoshikimate + phosphate. It functions in the pathway metabolic intermediate biosynthesis; chorismate biosynthesis; chorismate from D-erythrose 4-phosphate and phosphoenolpyruvate: step 6/7. Functionally, catalyzes the transfer of the enolpyruvyl moiety of phosphoenolpyruvate (PEP) to the 5-hydroxyl of shikimate-3-phosphate (S3P) to produce enolpyruvyl shikimate-3-phosphate and inorganic phosphate. This is 3-phosphoshikimate 1-carboxyvinyltransferase from Phenylobacterium zucineum (strain HLK1).